Here is a 496-residue protein sequence, read N- to C-terminus: 2,3-bisphosphoglycerate-independent phosphoglycerate mutase (496 aa).

Positions 12 and 62 each coordinate Mn(2+). The Phosphoserine intermediate role is filled by Ser-62. Substrate is bound by residues His-121, 150 to 151 (RD), Arg-181, Arg-187, 252 to 255 (RNDR), and Lys-317. Residues Asp-384, His-388, Asp-425, His-426, and His-444 each contribute to the Mn(2+) site.

The protein belongs to the BPG-independent phosphoglycerate mutase family. In terms of assembly, monomer. The cofactor is Mn(2+).

The catalysed reaction is (2R)-2-phosphoglycerate = (2R)-3-phosphoglycerate. It participates in carbohydrate degradation; glycolysis; pyruvate from D-glyceraldehyde 3-phosphate: step 3/5. Its function is as follows. Catalyzes the interconversion of 2-phosphoglycerate and 3-phosphoglycerate. This chain is 2,3-bisphosphoglycerate-independent phosphoglycerate mutase, found in Anaplasma phagocytophilum (strain HZ).